A 486-amino-acid chain; its full sequence is Probable glycine dehydrogenase (decarboxylating) subunit 2 (486 aa).

At Lys273 the chain carries N6-(pyridoxal phosphate)lysine.

Belongs to the GcvP family. C-terminal subunit subfamily. The glycine cleavage system is composed of four proteins: P, T, L and H. In this organism, the P 'protein' is a heterodimer of two subunits. It depends on pyridoxal 5'-phosphate as a cofactor.

It carries out the reaction N(6)-[(R)-lipoyl]-L-lysyl-[glycine-cleavage complex H protein] + glycine + H(+) = N(6)-[(R)-S(8)-aminomethyldihydrolipoyl]-L-lysyl-[glycine-cleavage complex H protein] + CO2. The glycine cleavage system catalyzes the degradation of glycine. The P protein binds the alpha-amino group of glycine through its pyridoxal phosphate cofactor; CO(2) is released and the remaining methylamine moiety is then transferred to the lipoamide cofactor of the H protein. This is Probable glycine dehydrogenase (decarboxylating) subunit 2 from Alkaliphilus oremlandii (strain OhILAs) (Clostridium oremlandii (strain OhILAs)).